Here is a 363-residue protein sequence, read N- to C-terminus: GDP-fucose transporter (363 aa).

8 helical membrane passes run 30 to 47 (VITA…LVFL), 62 to 79 (FITW…LFLS), 126 to 148 (VSFY…YLIL), 152 to 171 (TSGQ…LLGV), 180 to 202 (LSYT…AIYT), 222 to 244 (LNAL…VFYF), 251 to 273 (TFWI…TGWQ), and 307 to 326 (LLWW…YTYV). A disordered region spans residues 334–363 (KNSGASPASEAKSDKVKLLGRDGNAAEESV). The segment covering 344 to 353 (AKSDKVKLLG) has biased composition (basic and acidic residues).

It belongs to the TPT transporter family. SLC35C subfamily.

The protein resides in the golgi apparatus membrane. Its function is as follows. Involved in GDP-fucose import from the cytoplasm into the Golgi lumen. The sequence is that of GDP-fucose transporter from Caenorhabditis elegans.